A 287-amino-acid chain; its full sequence is uncharacterized protein (287 aa).

Belongs to the A.longa ORF167/ORF288 family.

The protein localises to the plastid. This is an uncharacterized protein from Euglena longa (Euglenophycean alga).